A 511-amino-acid chain; its full sequence is MEKNKRAIGFLLLVVLINGVMMTRSNGYEGEEEWGGAGGGEWGGAEGGGAWGGGGGGGGAWGGEGEGGGEWGGGGEGGGGGRRGWFMMRESRQVIKSEGGEMRVVLSPRGRIIEKPMHIGFLTMEPKTLFVPQYLDSSLLIFIRQGEATLGVICKDEFGERKLKAGDIYWIPAGSVFYLHNTGLGQRLHVICSIDPTQSLGFETFQPFYIGGGPSSVLAGFDPHTLTSAFNVSLPELQQMMMSQFRGPIVYVTEGPQPQPQSTVWTQFLGLRGEEKHKQLKKLLETKQGSPQDQQYSSGWSWRNIVRSILDLTEEKNKGSGSSECEDSYNIYDKKDKPSFDNKYGWSIALDYDDYKPLKHSGIGVYLVNLTAGAMMAPHMNPTATEYGIVLAGSGEIQVVFPNGTSAMNTRVSVGDVFWIPRYFAFCQIASRTGPFEFVGFTTSAHKNRPQFLVGSNSLLRTLNLTSLSIAFGVDEETMRRFIEAQREAVILPTPAAAPPHVGEMVSDRFV.

Residues 1–27 (MEKNKRAIGFLLLVVLINGVMMTRSNG) form the signal peptide. Residues 54 to 81 (GGGGGGAWGGEGEGGGEWGGGGEGGGGG) are disordered. Cupin type-1 domains lie at 86–238 (FMMR…PELQ) and 329–480 (YNIY…ETMR). Asn-231, Asn-369, Asn-403, and Asn-464 each carry an N-linked (GlcNAc...) asparagine glycan.

This sequence belongs to the 7S seed storage protein family.

Seed storage protein. This chain is Vicilin-like seed storage protein At2g28490, found in Arabidopsis thaliana (Mouse-ear cress).